Consider the following 588-residue polypeptide: Secreted triacylglycerol lipase LIP1 (588 aa).

The signal sequence occupies residues 1 to 20; that stretch reads MRFSGFVSGLGLGLLTAVSA. Catalysis depends on S258, which acts as the Acyl-ester intermediate. N400 carries N-linked (GlcNAc...) asparagine glycosylation.

Belongs to the type-B carboxylesterase/lipase family.

The protein localises to the secreted. The catalysed reaction is a triacylglycerol + H2O = a diacylglycerol + a fatty acid + H(+). In terms of biological role, secreted acylglycerol lipase required for efficient utilization of saturated triglyceride lipids. Is not involved in virulence. This Gibberella zeae (strain ATCC MYA-4620 / CBS 123657 / FGSC 9075 / NRRL 31084 / PH-1) (Wheat head blight fungus) protein is Secreted triacylglycerol lipase LIP1.